The sequence spans 85 residues: Small ribosomal subunit protein bS18 (85 aa).

The protein belongs to the bacterial ribosomal protein bS18 family. As to quaternary structure, part of the 30S ribosomal subunit. Forms a tight heterodimer with protein bS6.

In terms of biological role, binds as a heterodimer with protein bS6 to the central domain of the 16S rRNA, where it helps stabilize the platform of the 30S subunit. This chain is Small ribosomal subunit protein bS18, found in Hyphomonas neptunium (strain ATCC 15444).